Consider the following 367-residue polypeptide: Small ribosomal subunit biogenesis GTPase RsgA (367 aa).

The region spanning 112–267 is the CP-type G domain; that stretch reads AEQVLATNVD…VIDTPGLREL (156 aa). GTP is bound by residues 157–160 and 209–217; these read NKSD and GSSGAGKST. 4 residues coordinate Zn(2+): Cys-291, Cys-296, His-298, and Cys-304.

The protein belongs to the TRAFAC class YlqF/YawG GTPase family. RsgA subfamily. In terms of assembly, monomer. Associates with 30S ribosomal subunit, binds 16S rRNA. Zn(2+) is required as a cofactor.

It localises to the cytoplasm. Its function is as follows. One of several proteins that assist in the late maturation steps of the functional core of the 30S ribosomal subunit. Helps release RbfA from mature subunits. May play a role in the assembly of ribosomal proteins into the subunit. Circularly permuted GTPase that catalyzes slow GTP hydrolysis, GTPase activity is stimulated by the 30S ribosomal subunit. This chain is Small ribosomal subunit biogenesis GTPase RsgA, found in Opitutus terrae (strain DSM 11246 / JCM 15787 / PB90-1).